We begin with the raw amino-acid sequence, 367 residues long: 3-isopropylmalate dehydrogenase (367 aa).

Residue 75–88 (GPKWDGIERSKRPE) participates in NAD(+) binding. Substrate is bound by residues Arg-95, Arg-105, Arg-133, and Asp-230. Residues Asp-230, Asp-254, and Asp-258 each contribute to the Mg(2+) site. 288 to 300 (GSAPDIAGQDIAN) serves as a coordination point for NAD(+).

It belongs to the isocitrate and isopropylmalate dehydrogenases family. LeuB type 1 subfamily. As to quaternary structure, homodimer. Mg(2+) is required as a cofactor. Mn(2+) serves as cofactor.

It is found in the cytoplasm. It carries out the reaction (2R,3S)-3-isopropylmalate + NAD(+) = 4-methyl-2-oxopentanoate + CO2 + NADH. It participates in amino-acid biosynthesis; L-leucine biosynthesis; L-leucine from 3-methyl-2-oxobutanoate: step 3/4. Its function is as follows. Catalyzes the oxidation of 3-carboxy-2-hydroxy-4-methylpentanoate (3-isopropylmalate) to 3-carboxy-4-methyl-2-oxopentanoate. The product decarboxylates to 4-methyl-2 oxopentanoate. The polypeptide is 3-isopropylmalate dehydrogenase (Psychrobacter arcticus (strain DSM 17307 / VKM B-2377 / 273-4)).